A 431-amino-acid polypeptide reads, in one-letter code: Mothers against decapentaplegic homolog 6 (431 aa).

Basic residues predominate over residues 1-15; the sequence is MFRSKRSGLVRRLWR. Positions 1–95 are disordered; that stretch reads MFRSKRSGLV…SPPGPGGGEA (95 aa). A compositionally biased stretch (polar residues) spans 29-38; the sequence is GQSSERNATA. Residues 71 to 90 show a composition bias toward pro residues; that stretch reads PELPPPPPPPPPGGASPPGP. Positions 85-209 constitute an MH1 domain; sequence ASPPGPGGGE…FSRLCGPESP (125 aa). Zn(2+)-binding residues include Cys-139, Cys-182, Cys-194, and His-199. Positions 235–245 are enriched in polar residues; it reads TETEATNSPNV. The disordered stretch occupies residues 235-258; sequence TETEATNSPNVTPGEFSDASTSPD. Residues 265 to 431 enclose the MH2 domain; the sequence is WCNVAYWEHR…WLEILLSNNR (167 aa).

This sequence belongs to the dwarfin/SMAD family. Developing heart, eyes and limbs.

The protein resides in the nucleus. In terms of biological role, transforming growth factor-beta superfamily receptors signaling occurs through the Smad family of intracellular mediators. SMAD6 is an inhibitory Smad (i-Smad) that negatively regulates signaling downstream of type I transforming growth factor-beta. Acts as a mediator of TGF-beta and BMP anti-inflammatory activities. Suppresses IL1R-TLR signaling through its direct interaction with PEL1, preventing NF-kappa-B activation, nuclear transport and NF-kappa-B-mediated expression of pro-inflammatory genes. Blocks the BMP-SMAD1 signaling pathway by competing with SMAD4 for receptor-activated SMAD1-binding. Binds to regulatory elements in target promoter regions. The protein is Mothers against decapentaplegic homolog 6 (SMAD6) of Gallus gallus (Chicken).